A 208-amino-acid polypeptide reads, in one-letter code: Elongation factor Ts, chloroplastic (208 aa).

It belongs to the EF-Ts family.

It is found in the plastid. The protein resides in the chloroplast. Functionally, associates with the EF-Tu.GDP complex and induces the exchange of GDP to GTP. It remains bound to the aminoacyl-tRNA.EF-Tu.GTP complex up to the GTP hydrolysis stage on the ribosome. The protein is Elongation factor Ts, chloroplastic (tsf) of Cyanidium caldarium (Red alga).